The sequence spans 689 residues: Glycine--tRNA ligase beta subunit (689 aa).

It belongs to the class-II aminoacyl-tRNA synthetase family. Tetramer of two alpha and two beta subunits.

The protein resides in the cytoplasm. It carries out the reaction tRNA(Gly) + glycine + ATP = glycyl-tRNA(Gly) + AMP + diphosphate. The chain is Glycine--tRNA ligase beta subunit from Aeromonas salmonicida (strain A449).